A 191-amino-acid polypeptide reads, in one-letter code: UPF0398 protein LCABL_17010 (191 aa).

This sequence belongs to the UPF0398 family.

The chain is UPF0398 protein LCABL_17010 from Lacticaseibacillus casei (strain BL23) (Lactobacillus casei).